Consider the following 140-residue polypeptide: Putative septation protein SpoVG (140 aa).

The tract at residues 88–127 (VAPQAGGLQGAEEPTAVEPAPQLQDESELPWEPGDDGEGA) is disordered. Residues 112–124 (DESELPWEPGDDG) show a composition bias toward acidic residues.

Belongs to the SpoVG family.

Functionally, could be involved in septation. This is Putative septation protein SpoVG from Symbiobacterium thermophilum (strain DSM 24528 / JCM 14929 / IAM 14863 / T).